A 525-amino-acid chain; its full sequence is Glutathione hydrolase-like YwrD proenzyme (525 aa).

The Nucleophile role is filled by threonine 339.

It belongs to the gamma-glutamyltransferase family. As to quaternary structure, this enzyme consists of two polypeptide chains, which are synthesized from a single polypeptide. Post-translationally, cleaved by autocatalysis into a large and a small subunit.

The enzyme catalyses an N-terminal (5-L-glutamyl)-[peptide] + an alpha-amino acid = 5-L-glutamyl amino acid + an N-terminal L-alpha-aminoacyl-[peptide]. It catalyses the reaction glutathione + H2O = L-cysteinylglycine + L-glutamate. It carries out the reaction an S-substituted glutathione + H2O = an S-substituted L-cysteinylglycine + L-glutamate. Its function is as follows. Overexpressed protein with an N-terminal His tag has been reported not to hydrolyze glutathione; it is not clear if the construct is processed to 2 subunits. The sequence is that of Glutathione hydrolase-like YwrD proenzyme (ywrD) from Bacillus subtilis (strain 168).